Reading from the N-terminus, the 390-residue chain is NADH-quinone oxidoreductase subunit D (390 aa).

Belongs to the complex I 49 kDa subunit family. NDH-1 is composed of 14 different subunits. Subunits NuoB, C, D, E, F, and G constitute the peripheral sector of the complex.

The protein localises to the cell inner membrane. It carries out the reaction a quinone + NADH + 5 H(+)(in) = a quinol + NAD(+) + 4 H(+)(out). Its function is as follows. NDH-1 shuttles electrons from NADH, via FMN and iron-sulfur (Fe-S) centers, to quinones in the respiratory chain. The immediate electron acceptor for the enzyme in this species is believed to be ubiquinone. Couples the redox reaction to proton translocation (for every two electrons transferred, four hydrogen ions are translocated across the cytoplasmic membrane), and thus conserves the redox energy in a proton gradient. The protein is NADH-quinone oxidoreductase subunit D of Geobacter sulfurreducens (strain ATCC 51573 / DSM 12127 / PCA).